A 394-amino-acid chain; its full sequence is Probable ribosome production factor 1 (394 aa).

Disordered stretches follow at residues 1–98 (MIKI…PVLN) and 116–152 (MKKEKHKKKMQERRARRKAGVPANPGHTIESLREKDQ). Acidic residues-rich tracts occupy residues 15–33 (QDSDSDSSFDEEEPQDLEV) and 59–88 (ASEDLKEEDDDDDEEENDDDDEEEDDDDDD). The segment covering 116–134 (MKKEKHKKKMQERRARRKA) has biased composition (basic residues). The region spanning 185–369 (PKVLITFADN…LRSLQEGTFD (185 aa)) is the Brix domain. Residues 347–364 (VKLRELGPRFTLKLRSLQ) are RNA-binding.

The protein localises to the nucleus. It is found in the nucleolus. Functionally, may be required for ribosome biogenesis. In Drosophila melanogaster (Fruit fly), this protein is Probable ribosome production factor 1.